Here is a 263-residue protein sequence, read N- to C-terminus: tRNA (guanine-N(1)-)-methyltransferase (263 aa).

Residues glycine 124 and 144–149 (LGDFVL) contribute to the S-adenosyl-L-methionine site.

The protein belongs to the RNA methyltransferase TrmD family. Homodimer.

Its subcellular location is the cytoplasm. The enzyme catalyses guanosine(37) in tRNA + S-adenosyl-L-methionine = N(1)-methylguanosine(37) in tRNA + S-adenosyl-L-homocysteine + H(+). In terms of biological role, specifically methylates guanosine-37 in various tRNAs. This chain is tRNA (guanine-N(1)-)-methyltransferase, found in Aromatoleum aromaticum (strain DSM 19018 / LMG 30748 / EbN1) (Azoarcus sp. (strain EbN1)).